A 302-amino-acid chain; its full sequence is Sulfate adenylyltransferase subunit 2 (302 aa).

The protein belongs to the PAPS reductase family. CysD subfamily. Heterodimer composed of CysD, the smaller subunit, and CysN.

The catalysed reaction is sulfate + ATP + H(+) = adenosine 5'-phosphosulfate + diphosphate. It participates in sulfur metabolism; hydrogen sulfide biosynthesis; sulfite from sulfate: step 1/3. Functionally, with CysN forms the ATP sulfurylase (ATPS) that catalyzes the adenylation of sulfate producing adenosine 5'-phosphosulfate (APS) and diphosphate, the first enzymatic step in sulfur assimilation pathway. APS synthesis involves the formation of a high-energy phosphoric-sulfuric acid anhydride bond driven by GTP hydrolysis by CysN coupled to ATP hydrolysis by CysD. This chain is Sulfate adenylyltransferase subunit 2, found in Baumannia cicadellinicola subsp. Homalodisca coagulata.